Reading from the N-terminus, the 601-residue chain is NADH-ubiquinone oxidoreductase chain 5 (601 aa).

Transmembrane regions (helical) follow at residues 5 to 25 (ITSL…TLSF), 37 to 54 (YMRN…IYID), 83 to 105 (YCLT…SLWY), 112 to 129 (TLFF…LFFL), 134 to 156 (LLQL…NWWH), 169 to 189 (IIYN…SALF), 209 to 231 (WLPL…LHPW), 240 to 260 (TPVS…FLLI), 271 to 291 (MIIS…ALCA), 300 to 320 (IIAF…GINQ), 323 to 343 (LAFL…LCSA), 363 to 383 (LILP…MGMP), 400 to 420 (MSYV…LTSI), 451 to 471 (PLIR…TFFL), 478 to 498 (FSIP…VSSL), 508 to 528 (FSHM…AIFH), and 581 to 601 (NYIT…ALYF).

It belongs to the complex I subunit 5 family.

It is found in the mitochondrion inner membrane. It catalyses the reaction a ubiquinone + NADH + 5 H(+)(in) = a ubiquinol + NAD(+) + 4 H(+)(out). In terms of biological role, core subunit of the mitochondrial membrane respiratory chain NADH dehydrogenase (Complex I) that is believed to belong to the minimal assembly required for catalysis. Complex I functions in the transfer of electrons from NADH to the respiratory chain. The immediate electron acceptor for the enzyme is believed to be ubiquinone. This is NADH-ubiquinone oxidoreductase chain 5 (MT-ND5) from Myxine glutinosa (Atlantic hagfish).